A 422-amino-acid polypeptide reads, in one-letter code: Adenylosuccinate synthetase (422 aa).

GTP-binding positions include 11–17 and 39–41; these read GDEGKGK and GHT. The active-site Proton acceptor is Asp-12. Mg(2+)-binding residues include Asp-12 and Gly-39. IMP contacts are provided by residues 12–15, 37–40, Thr-129, Arg-143, Asn-220, Thr-235, and Arg-299; these read DEGK and NAGH. His-40 acts as the Proton donor in catalysis. 295-301 serves as a coordination point for substrate; the sequence is VTTGRKR. Residues Arg-301, 327-329, and 410-412 each bind GTP; these read KLD and GTG.

It belongs to the adenylosuccinate synthetase family. As to quaternary structure, homodimer. It depends on Mg(2+) as a cofactor.

It localises to the cytoplasm. The enzyme catalyses IMP + L-aspartate + GTP = N(6)-(1,2-dicarboxyethyl)-AMP + GDP + phosphate + 2 H(+). It participates in purine metabolism; AMP biosynthesis via de novo pathway; AMP from IMP: step 1/2. Plays an important role in the de novo pathway and in the salvage pathway of purine nucleotide biosynthesis. Catalyzes the first committed step in the biosynthesis of AMP from IMP. This is Adenylosuccinate synthetase from Arthroderma otae (strain ATCC MYA-4605 / CBS 113480) (Microsporum canis).